A 691-amino-acid chain; its full sequence is Pentatricopeptide repeat-containing protein At4g37170 (691 aa).

PPR repeat units follow at residues 84–118, 119–149, 150–184, 185–211, 217–251, 252–286, 287–317, 318–352, 353–383, 384–418, 419–449, and 455–485; these read PAST…GFVP, GIVI…MPNR, DLCS…DSYS, WTAM…MQRV, NIFT…GLDS, DEVL…DVVS, WTSM…CERP, NEYT…GFDP, YSFA…CPKP, DLVS…GTKP, DHVT…ITEK, and TSDH…MPMK. The type E motif stretch occupies residues 490–565; that stretch reads LWASVLGGCS…RPGSSWTEIK (76 aa). The type E(+) motif stretch occupies residues 566 to 596; the sequence is RKRHVFIAADTSHPMYNQIVEFLRELRKKMK. A type DYW motif region spans residues 597–691; that stretch reads EEGYVPATSL…NGQCSCGDYW (95 aa).

The protein belongs to the PPR family. PCMP-H subfamily.

In Arabidopsis thaliana (Mouse-ear cress), this protein is Pentatricopeptide repeat-containing protein At4g37170 (PCMP-H5).